The following is a 580-amino-acid chain: Extracellular protease (580 aa).

An N-terminal signal peptide occupies residues M1–A32. A propeptide spanning residues G33–T136 is cleaved from the precursor. The 319-residue stretch at Q147–V465 folds into the Peptidase S8 domain. Active-site charge relay system residues include D177 and H237. 2 cysteine pairs are disulfide-bonded: C225/C273 and C315/C352. S409 functions as the Charge relay system in the catalytic mechanism. A disulfide bond links C450 and C454.

This sequence belongs to the peptidase S8 family.

Its subcellular location is the secreted. This Xanthomonas campestris pv. campestris (strain ATCC 33913 / DSM 3586 / NCPPB 528 / LMG 568 / P 25) protein is Extracellular protease.